Reading from the N-terminus, the 267-residue chain is tRNA pseudouridine synthase A (267 aa).

Asp51 functions as the Nucleophile in the catalytic mechanism. Tyr109 contacts substrate.

It belongs to the tRNA pseudouridine synthase TruA family. In terms of assembly, homodimer.

The catalysed reaction is uridine(38/39/40) in tRNA = pseudouridine(38/39/40) in tRNA. Functionally, formation of pseudouridine at positions 38, 39 and 40 in the anticodon stem and loop of transfer RNAs. The chain is tRNA pseudouridine synthase A from Staphylococcus aureus (strain MSSA476).